Consider the following 592-residue polypeptide: Laccase PFICI_06862 (592 aa).

The signal sequence occupies residues 1 to 19 (MYIQTQFASLLLLAGTSLA). The N-linked (GlcNAc...) asparagine glycan is linked to Asn26. Plastocyanin-like domains are found at residues 32–142 (QWSS…WIAP) and 173–350 (VVIS…RYPG). Residues His78, His80, His123, and His125 each contribute to the Cu cation site. N-linked (GlcNAc...) asparagine glycans are attached at residues Asn370, Asn407, and Asn454. Residues 445 to 563 (SDVQGGSMQN…AGQQVVLLEG (119 aa)) form the Plastocyanin-like 3 domain. Residue His475 participates in Cu cation binding. N-linked (GlcNAc...) asparagine glycosylation occurs at Asn524.

The protein belongs to the multicopper oxidase family.

Its subcellular location is the cell surface. It functions in the pathway pigment biosynthesis; melanin biosynthesis. Functionally, laccase involved the biosynthesis of dihydroxynaphthalene (DHN)-melanin, a bluish-green pigment forming a dark layer in the conidial wall that protects the conidia from UV radiations. The first step of the pathway is the production of the pentaketide 1,3,6,8-tetrahydroxynaphthalene (1,3,6,8-THN or T4HN) by the polyketide synthase PfmaE though condensation of acetyl-CoA with malonyl-CoA. T4HN is not stable and easily oxidizes into the stable form flaviolin. T4HN is also substrate of the hydroxynaphthalene reductase PfmaG to yield scytalone. The scytalone dehydratase PfmaJ then reduces scytalone to 1,3,8-THN. 1,3,8-THN is then substrate of the hydroxynaphthalene reductase PfmaI to yield vermelone. Vermelone is further converted by the multicopper oxidase PfmaD to 1,8-DHN. Finally the laccase PFICI_06862 transforms 1,8-DHN to DHN-melanin. The roles of the 5-oxoprolinase PfmaA and the proline iminopeptidase PfmaB within the cluster have not been elucidated yet. This Pestalotiopsis fici (strain W106-1 / CGMCC3.15140) protein is Laccase PFICI_06862.